Reading from the N-terminus, the 134-residue chain is MTLNLCVLTPNRILWDSEVKEIILPTNSGQIGVLPNHASIVTTIDIGVLRIRHFNDQWFTIALMGGFTRIRNNEITILATAAEKGSDIDPQEAQQTLQIAEDSLRKAEDKRQRIEAKLAIKRASTRVKAINPIS.

The protein belongs to the ATPase epsilon chain family. As to quaternary structure, F-type ATPases have 2 components, CF(1) - the catalytic core - and CF(0) - the membrane proton channel. CF(1) has five subunits: alpha(3), beta(3), gamma(1), delta(1), epsilon(1). CF(0) has three main subunits: a, b and c.

The protein localises to the plastid. It localises to the chloroplast thylakoid membrane. Produces ATP from ADP in the presence of a proton gradient across the membrane. This is ATP synthase epsilon chain, chloroplastic from Pelargonium hortorum (Common geranium).